A 288-amino-acid chain; its full sequence is 6-phospho-5-dehydro-2-deoxy-D-gluconate aldolase (288 aa).

D85 acts as the Proton donor in catalysis. H86 and H180 together coordinate Zn(2+). G181 serves as a coordination point for dihydroxyacetone phosphate. Zn(2+) is bound at residue H208. Dihydroxyacetone phosphate contacts are provided by residues 209–211 (GGS) and 230–233 (NVNT). Position 233 is a phosphothreonine (T233).

The protein belongs to the class II fructose-bisphosphate aldolase family. IolJ subfamily. Zn(2+) is required as a cofactor.

It catalyses the reaction 6-phospho-5-dehydro-2-deoxy-D-gluconate = 3-oxopropanoate + dihydroxyacetone phosphate. It functions in the pathway polyol metabolism; myo-inositol degradation into acetyl-CoA; acetyl-CoA from myo-inositol: step 6/7. Produces dihydroxyacetone phosphate (DHAP or glycerone phosphate) and malonic semialdehyde (MSA or 3-oxopropanoate) from 6-phospho-5-dehydro-2-deoxy-D-gluconate (DKGP). This Halalkalibacterium halodurans (strain ATCC BAA-125 / DSM 18197 / FERM 7344 / JCM 9153 / C-125) (Bacillus halodurans) protein is 6-phospho-5-dehydro-2-deoxy-D-gluconate aldolase (iolJ).